The primary structure comprises 509 residues: Probable aspartic-type endopeptidase CTSD (509 aa).

Residues 1 to 21 form the signal peptide; that stretch reads MQFLWLCLLSAVTLQFTGTLA. The Peptidase A1 domain maps to 102–408; sequence YFSEVKVGSE…DFDKNRVGLA (307 aa). Asp120 is a catalytic residue. The N-linked (GlcNAc...) asparagine glycan is linked to Asn174. Asp302 is an active-site residue. Asn361 carries N-linked (GlcNAc...) asparagine glycosylation. The interval 451 to 489 is disordered; that stretch reads NKAPSGGSPGLPAESGSDSTTNGEATNGATSSPNSSSSV. The span at 466 to 480 shows a compositional bias: polar residues; that stretch reads GSDSTTNGEATNGAT. The N-linked (GlcNAc...) asparagine glycan is linked to Asn484. Ser485 carries the GPI-anchor amidated serine lipid modification. Residues 486 to 509 constitute a propeptide, removed in mature form; the sequence is SSSVLTPTWLTLAVFFAIGSSLWS.

Belongs to the peptidase A1 family.

It is found in the cell membrane. Functionally, probable GPI-anchored aspartic-type endopeptidase which contributes to virulence. In Trichophyton verrucosum (strain HKI 0517), this protein is Probable aspartic-type endopeptidase CTSD (CTSD).